Here is a 277-residue protein sequence, read N- to C-terminus: MLVHPQFNPIALDLGFFQIHWYGLTYLAAFGLFYFLATRRIRQAPYASGSGPAWTARDVEDLLFFGVVGVILGGRLGYVLFYKPTYYLANLSEIPAVWKGGMAFHGGLLGVIVAMALFAHLRGRKFFEVTDLVAPCVPTGLAMGRIGNFINGELWGRAADASLPWAMVFPQSGSDLPRHPSQLYQFALEGLALFALTWFYGHSRSAHVGADGRPIWGRVSGLFVGGYGVFRFIAEYFREPDSFLGLLAFNLSMGQWLCVPMIVAGALIWWSAGRRRV.

Helical transmembrane passes span 16-36, 62-82, and 101-121; these read FFQI…FYFL, LLFF…VLFY, and GMAF…FAHL. An a 1,2-diacyl-sn-glycero-3-phospho-(1'-sn-glycerol)-binding site is contributed by Arg-145. The next 2 membrane-spanning stretches (helical) occupy residues 214–234 and 243–263; these read PIWG…RFIA and FLGL…PMIV.

This sequence belongs to the Lgt family.

It is found in the cell inner membrane. It carries out the reaction L-cysteinyl-[prolipoprotein] + a 1,2-diacyl-sn-glycero-3-phospho-(1'-sn-glycerol) = an S-1,2-diacyl-sn-glyceryl-L-cysteinyl-[prolipoprotein] + sn-glycerol 1-phosphate + H(+). It participates in protein modification; lipoprotein biosynthesis (diacylglyceryl transfer). Its function is as follows. Catalyzes the transfer of the diacylglyceryl group from phosphatidylglycerol to the sulfhydryl group of the N-terminal cysteine of a prolipoprotein, the first step in the formation of mature lipoproteins. This chain is Phosphatidylglycerol--prolipoprotein diacylglyceryl transferase, found in Leptothrix cholodnii (strain ATCC 51168 / LMG 8142 / SP-6) (Leptothrix discophora (strain SP-6)).